The following is a 251-amino-acid chain: Triosephosphate isomerase (251 aa).

Residue 9-11 (NWK) coordinates substrate. H96 functions as the Electrophile in the catalytic mechanism. Residue E168 is the Proton acceptor of the active site. Residues G174, S214, and 235 to 236 (GG) contribute to the substrate site.

It belongs to the triosephosphate isomerase family. In terms of assembly, homodimer.

Its subcellular location is the cytoplasm. The catalysed reaction is D-glyceraldehyde 3-phosphate = dihydroxyacetone phosphate. Its pathway is carbohydrate biosynthesis; gluconeogenesis. The protein operates within carbohydrate degradation; glycolysis; D-glyceraldehyde 3-phosphate from glycerone phosphate: step 1/1. Involved in the gluconeogenesis. Catalyzes stereospecifically the conversion of dihydroxyacetone phosphate (DHAP) to D-glyceraldehyde-3-phosphate (G3P). This chain is Triosephosphate isomerase, found in Porphyromonas gingivalis (strain ATCC 33277 / DSM 20709 / CIP 103683 / JCM 12257 / NCTC 11834 / 2561).